A 74-amino-acid chain; its full sequence is High-potential iron-sulfur protein (74 aa).

Residues C36, C39, C53, and C67 each coordinate [4Fe-4S] cluster.

Belongs to the high-potential iron-sulfur protein (HiPIP) family. As to quaternary structure, homodimer.

Its function is as follows. Specific class of high-redox-potential 4Fe-4S ferredoxins. Functions in anaerobic electron transport in most purple and in some other photosynthetic bacteria and in at least one genus (Paracoccus) of halophilic, denitrifying bacteria. The sequence is that of High-potential iron-sulfur protein (hip) from Rubrivivax gelatinosus (Rhodocyclus gelatinosus).